A 225-amino-acid chain; its full sequence is UPF0725 protein At5g63820 (225 aa).

The protein belongs to the UPF0725 (EMB2204) family.

The sequence is that of UPF0725 protein At5g63820 from Arabidopsis thaliana (Mouse-ear cress).